Here is a 190-residue protein sequence, read N- to C-terminus: Cell division protein SepF (190 aa).

Belongs to the SepF family. In terms of assembly, homodimer. Interacts with FtsZ.

It localises to the cytoplasm. In terms of biological role, cell division protein that is part of the divisome complex and is recruited early to the Z-ring. Probably stimulates Z-ring formation, perhaps through the cross-linking of FtsZ protofilaments. Its function overlaps with FtsA. This Synechococcus sp. (strain WH7803) protein is Cell division protein SepF.